Consider the following 152-residue polypeptide: ALK and LTK ligand 1 (152 aa).

Positions Met-1–Cys-23 are cleaved as a signal peptide. Disulfide bonds link Cys-113–Cys-149 and Cys-127–Cys-136.

Belongs to the ALKAL family. In terms of tissue distribution, expressed at low level in the notochord and iridophore stripes, the eye and the swim bladder.

Its subcellular location is the secreted. The protein localises to the cell membrane. Its function is as follows. Cytokine that acts as a physiological ligand for receptor tyrosine kinases LTK and ALK. Required for iridophore development in the adult eye by acting as a receptor for LTK. The sequence is that of ALK and LTK ligand 1 from Danio rerio (Zebrafish).